We begin with the raw amino-acid sequence, 294 residues long: Shikimate kinase (294 aa).

87–97 provides a ligand contact to ATP; that stretch reads PLAGGLKSSSA.

Belongs to the GHMP kinase family. Archaeal shikimate kinase subfamily.

Its subcellular location is the cytoplasm. It catalyses the reaction shikimate + ATP = 3-phosphoshikimate + ADP + H(+). It participates in metabolic intermediate biosynthesis; chorismate biosynthesis; chorismate from D-erythrose 4-phosphate and phosphoenolpyruvate: step 5/7. This is Shikimate kinase (aroK) from Methanosarcina acetivorans (strain ATCC 35395 / DSM 2834 / JCM 12185 / C2A).